The following is a 104-amino-acid chain: Large ribosomal subunit protein uL23 (104 aa).

Belongs to the universal ribosomal protein uL23 family. As to quaternary structure, part of the 50S ribosomal subunit. Contacts protein L29, and trigger factor when it is bound to the ribosome.

Functionally, one of the early assembly proteins it binds 23S rRNA. One of the proteins that surrounds the polypeptide exit tunnel on the outside of the ribosome. Forms the main docking site for trigger factor binding to the ribosome. The polypeptide is Large ribosomal subunit protein uL23 (Leptospira interrogans serogroup Icterohaemorrhagiae serovar copenhageni (strain Fiocruz L1-130)).